Here is a 578-residue protein sequence, read N- to C-terminus: MAASTTLALSHPKTLAAAAAAAPKAPTAPAAVSFPVSHAACAPLAARRRAVTAMVAAPPAVGAAMPSLDFDTSVFNKEKVSLAGHEEYIVRGGRNLFPLLPEAFKGIKQIGVIGWGSQGPAQAQNLRDSLAEAKSDIVVKIGLRKGSKSFDEARAAGFTEESGTLGDIWETVSGSDLVLLLISDAAQADNYEKIFSHMKPNSILGLSHGFLLGHLQSAGLDFPKNISVIAVCPKGMGPSVRRLYVQGKEINGAGINSSFAVHQDVDGRATDVALGWSVALGSPFTFATTLEQEYKSDIFGERGILLGAVHGIVEALFRRYTEQGMDEEMAYKNTVEGITGIISKTISKKGMLEVYNSLTEEGKKEFNKAYSASFYPCMDILYECYEDVASGSEIRSVVLAGRRFYEKEGLPAFPMGNIDQTRMWKVGEKVRSTRPENDLGPLHPFTAGVYVALMMAQIEVLRKKGHSYSEIINESVIESVDSLNPFMHARGVAFMVDNCSTTARLGSRKWAPRFDYILTQQAFVTVDKDAPINQDLISNFMSDPVHGAIEVCAELRPTVDISVPANADFVRPELRQSS.

Residues 1–52 constitute a chloroplast transit peptide; it reads MAASTTLALSHPKTLAAAAAAAPKAPTAPAAVSFPVSHAACAPLAARRRAVT. One can recognise a KARI N-terminal Rossmann domain in the interval 90-288; it reads VRGGRNLFPL…ALGSPFTFAT (199 aa). NADP(+) is bound by residues 111–118, 144–149, and 183–187; these read GVIGWGSQ, RKGSKS, and SDAAQ. Histidine 208 is a catalytic residue. KARI C-terminal knotted domains are found at residues 289–437 and 438–574; these read TLEQ…RPEN and DLGP…RPEL. The Mg(2+) site is built by aspartate 297, glutamate 301, glutamate 474, and glutamate 478. Serine 500 provides a ligand contact to substrate.

It belongs to the ketol-acid reductoisomerase family. In terms of assembly, homodimer. Mg(2+) serves as cofactor.

Its subcellular location is the plastid. It is found in the chloroplast. The enzyme catalyses (2R)-2,3-dihydroxy-3-methylbutanoate + NADP(+) = (2S)-2-acetolactate + NADPH + H(+). It catalyses the reaction (2R,3R)-2,3-dihydroxy-3-methylpentanoate + NADP(+) = (S)-2-ethyl-2-hydroxy-3-oxobutanoate + NADPH + H(+). It functions in the pathway amino-acid biosynthesis; L-isoleucine biosynthesis; L-isoleucine from 2-oxobutanoate: step 2/4. Its pathway is amino-acid biosynthesis; L-valine biosynthesis; L-valine from pyruvate: step 2/4. This Oryza sativa subsp. japonica (Rice) protein is Ketol-acid reductoisomerase, chloroplastic.